A 594-amino-acid polypeptide reads, in one-letter code: Developmental and secondary metabolism regulator veA (594 aa).

The Velvet domain occupies 24–220 (GRRLFYRIDV…AEQGTRVRIR (197 aa)). The Nuclear localization signal signature appears at 38–43 (EKCRAC). 2 disordered regions span residues 40 to 59 (CRAC…VDPP) and 210 to 558 (MAEQ…DVEE). Residues 217–229 (VRIRRDVRMRRRD) are compositionally biased toward basic residues. Positions 296 to 307 (APPPPNPPPPGF) are enriched in pro residues. Low complexity predominate over residues 327–351 (SHSQYQQPTSSSSSSEQVSSVPQSP). Residues 352–362 (AYSSHAAQQHY) show a composition bias toward polar residues. Over residues 374–383 (PERRLSDHRS) the composition is skewed to basic and acidic residues. A compositionally biased stretch (low complexity) spans 384-403 (SQPNNHPQQSPHQHSYSHRS). The segment covering 405–416 (PQRERFMPDSRR) has biased composition (basic and acidic residues). A PEST region spans residues 457 to 506 (VADTQATPHLPPIRWPRPNMNLPSPPSEHQEALQPLQPAPLHYESQTHQQ). Low complexity predominate over residues 523–538 (YSYGYSYSHNHSHGYG).

This sequence belongs to the velvet family. VeA subfamily. In terms of assembly, component of the heterotrimeric velvet complex composed of LAEA, VEA and VELB; VEA acting as a bridging protein between LAEA and VELB.

The protein localises to the nucleus. The protein resides in the cytoplasm. In terms of biological role, component of the velvet transcription factor complex that controls sexual/asexual developmental ratio in response to light, promoting sexual development in the darkness while stimulating asexual sporulation under illumination. The velvet complex acts as a global regulator for secondary metabolite gene expression. Regulates of the response to reactive oxygen species (ROS) stress. This is Developmental and secondary metabolism regulator veA from Pyricularia oryzae (strain 70-15 / ATCC MYA-4617 / FGSC 8958) (Rice blast fungus).